We begin with the raw amino-acid sequence, 99 residues long: Teretoxin Tsu6.4 (99 aa).

A signal peptide spans 1–21; it reads MRLLLILVLLTPVIVAFSVDE. Positions 22-53 are excised as a propeptide; the sequence is ELNNADGANAASFTADQEVRHKRNLFPAIARR.

Contains 3 disulfide bonds. In terms of tissue distribution, expressed by the venom duct.

It localises to the secreted. The protein is Teretoxin Tsu6.4 of Terebra subulata (Chocolate spotted auger).